Reading from the N-terminus, the 372-residue chain is Pristinol synthase (372 aa).

Residues methionine 1–proline 12 show a composition bias toward basic and acidic residues. Residues methionine 1 to arginine 23 are disordered. Residues aspartate 100 and aspartate 104 each contribute to the Mg(2+) site. The DDXXD motif motif lies at aspartate 100 to aspartate 104. Arginine 197 provides a ligand contact to substrate. Mg(2+) contacts are provided by asparagine 243 and serine 247. Lysine 250 is a substrate binding site. Mg(2+) is bound at residue glutamate 251. A substrate-binding site is contributed by arginine 337–tyrosine 338. Positions glycine 349 to alanine 372 are disordered.

The protein belongs to the terpene synthase family. It depends on Mg(2+) as a cofactor.

It catalyses the reaction (2E,6E)-farnesyl diphosphate + H2O = (+)-(2S,3R,9R)-pristinol + diphosphate. It functions in the pathway secondary metabolite biosynthesis; terpenoid biosynthesis. In terms of biological role, catalyzes the conversion of (2E,6E)-farnesyl diphosphate (FPP) to yield a new 5-8 bicyclic (pristinane) sesquiterpenol (+)-(2S,3R,9R)-pristinol via a 1,11-cyclization, which requires the abstraction of the pyrophosphate from FPP to yield the humulyl cation. The only accepted substrate is farnesyl diphosphate (FPP). The chain is Pristinol synthase from Streptomyces pristinaespiralis (strain ATCC 25486 / DSM 40338 / CBS 914.69 / JCM 4507 / KCC S-0507 / NBRC 13074 / NRRL 2958 / 5647).